Here is a 213-residue protein sequence, read N- to C-terminus: Orotate phosphoribosyltransferase (213 aa).

Lysine 26 contributes to the 5-phospho-alpha-D-ribose 1-diphosphate binding site. 34–35 contributes to the orotate binding site; the sequence is FF. 5-phospho-alpha-D-ribose 1-diphosphate contacts are provided by residues 72–73, arginine 99, lysine 100, lysine 103, histidine 105, and 124–132; these read YK and DDVITAGTA. Orotate contacts are provided by threonine 128 and arginine 156.

The protein belongs to the purine/pyrimidine phosphoribosyltransferase family. PyrE subfamily. As to quaternary structure, homodimer. It depends on Mg(2+) as a cofactor.

The enzyme catalyses orotidine 5'-phosphate + diphosphate = orotate + 5-phospho-alpha-D-ribose 1-diphosphate. Its pathway is pyrimidine metabolism; UMP biosynthesis via de novo pathway; UMP from orotate: step 1/2. Catalyzes the transfer of a ribosyl phosphate group from 5-phosphoribose 1-diphosphate to orotate, leading to the formation of orotidine monophosphate (OMP). The protein is Orotate phosphoribosyltransferase of Alteromonas mediterranea (strain DSM 17117 / CIP 110805 / LMG 28347 / Deep ecotype).